Consider the following 210-residue polypeptide: Pre-mRNA-splicing factor 38 (210 aa).

Residues 181–210 (PLSSSSDEEDDDEEQISKLESNEGAVDRNI) are disordered. A compositionally biased stretch (basic and acidic residues) spans 195–210 (QISKLESNEGAVDRNI).

This sequence belongs to the PRP38 family. In terms of assembly, component of the 25S U4/U6.U5 tri-snRNP particle, a subcomplex of the spliceosome.

Its subcellular location is the nucleus. Its function is as follows. Required for pre-mRNA splicing and maintenance of stable U6 small nuclear RNA levels. Implicated in the formation of stable and biologically active snRNP structures. As part of the U4/U6.U5 tri-snRNP particle, dispensible for spliceosome assembly, but required for conformational changes, which result in U4 snRNA release and the subsequent catalytic activation of the spliceosome. The polypeptide is Pre-mRNA-splicing factor 38 (Schizosaccharomyces pombe (strain 972 / ATCC 24843) (Fission yeast)).